The chain runs to 436 residues: MKRRASDRGAGETSARAKALGSGISGNNAKRAGPFILGPRLGNSPVPSIVQCLARKDGTDDFYQLKILTLEERGDQGIESQEERQGKMLLHTEYSLLSLLHTQDGVVHHHGLFQDRTCEVVEDAESNRMVKKMKKRICLVLDCLCAHDFSDKTADLINLQHYVIKEKRLSERETVVIFYDVVRVVEALHQKNVVHRDLKLGNMVLSKRTHRITITNFCLGKHLVSEGDLLKDQRGSPAYISPDVLSGRPYRGKPSDMWALGVVLFTMLYGQFPFYDSIPQELFRKIKAAEYTIPEDGRVSENTVCLIRKLLVLDPQQRLAAADVLEALSSIIASWQSLSSLSGPLQVVPDIDDQMSNADSSQEAKVTEECSQYEFENYMRQQLLLAEEKSSVHEARSWVPKRQSGAGVPPVRRLGHDAQPVNPLDAAILAQRYLRK.

Positions 1–10 (MKRRASDRGA) are enriched in basic and acidic residues. A disordered region spans residues 1-25 (MKRRASDRGAGETSARAKALGSGIS). One can recognise a Protein kinase domain in the interval 35 to 332 (FILGPRLGNS…DVLEALSSII (298 aa)). Residues 41–49 (LGNSPVPSI) and K66 each bind ATP. Residue D197 is the Proton acceptor of the active site. The disordered stretch occupies residues 396 to 417 (RSWVPKRQSGAGVPPVRRLGHD).

This sequence belongs to the protein kinase superfamily. CAMK Ser/Thr protein kinase family.

It localises to the nucleus. Its subcellular location is the cytoplasm. The enzyme catalyses L-seryl-[protein] + ATP = O-phospho-L-seryl-[protein] + ADP + H(+). It catalyses the reaction L-threonyl-[protein] + ATP = O-phospho-L-threonyl-[protein] + ADP + H(+). In terms of biological role, may be a negative regulator of NF-kappa-B and p53-mediated gene transcription. The chain is Serine/threonine-protein kinase 40 (STK40) from Bos taurus (Bovine).